Reading from the N-terminus, the 37-residue chain is Large ribosomal subunit protein bL36c (37 aa).

This sequence belongs to the bacterial ribosomal protein bL36 family.

Its subcellular location is the plastid. The protein resides in the chloroplast. This is Large ribosomal subunit protein bL36c from Acorus calamus (Sweet flag).